Reading from the N-terminus, the 581-residue chain is Polypeptide N-acetylgalactosaminyltransferase 12 (581 aa).

Topologically, residues 1–19 are cytoplasmic; it reads MWGRTARRRCPRELRRGRE. Residues 20-37 traverse the membrane as a helical; Signal-anchor for type II membrane protein segment; sequence ALLVLLALLALAGLGSVL. At 38–581 the chain is on the lumenal side; it reads RAQRGAGAGA…QKWFFKERML (544 aa). The interval 43–67 is disordered; it reads AGAGAAEPGPPRTPRPGRREPVMPR. 5 cysteine pairs are disulfide-bonded: Cys-125–Cys-358, Cys-349–Cys-422, Cys-458–Cys-479, Cys-506–Cys-521, and Cys-547–Cys-566. Residues 135 to 244 are catalytic subdomain A; it reads LPRTSVIIAF…EGWLEPLLQR (110 aa). Substrate is bound by residues Asp-176 and Arg-205. Mn(2+) is bound by residues Asp-228 and His-230. The tract at residues 304–366 is catalytic subdomain B; it reads VIRSPTMAGG…PCSHVGHVFP (63 aa). Residue Trp-335 coordinates substrate. His-363 is a Mn(2+) binding site. Tyr-371 serves as a coordination point for substrate. Residues 445 to 577 form the Ricin B-type lectin domain; that stretch reads FFGMLQNKGL…NSDHQKWFFK (133 aa).

The protein belongs to the glycosyltransferase 2 family. GalNAc-T subfamily. Mn(2+) is required as a cofactor. In terms of tissue distribution, widely expressed at different levels of expression. Highly expressed in digestive organs such as small intestine, stomach, pancreas and colon. Expressed at intermediate level in testis, thyroid gland and spleen. Weakly expressed in whole brain, cerebral cortex, cerebellum, fetal brain, bone marrow, thymus, leukocytes, heart, skeletal muscle, liver, lung, esophagus, kidney, adrenal gland, mammary gland, uterus, placenta, ovary and prostate.

It is found in the golgi apparatus membrane. The catalysed reaction is L-seryl-[protein] + UDP-N-acetyl-alpha-D-galactosamine = a 3-O-[N-acetyl-alpha-D-galactosaminyl]-L-seryl-[protein] + UDP + H(+). The enzyme catalyses L-threonyl-[protein] + UDP-N-acetyl-alpha-D-galactosamine = a 3-O-[N-acetyl-alpha-D-galactosaminyl]-L-threonyl-[protein] + UDP + H(+). Its pathway is protein modification; protein glycosylation. Functionally, catalyzes the initial reaction in O-linked oligosaccharide biosynthesis, the transfer of an N-acetyl-D-galactosamine residue to a serine or threonine residue on the protein receptor. Has activity toward non-glycosylated peptides such as Muc5AC, Muc1a and EA2, and no detectable activity with Muc2 and Muc7. Displays enzymatic activity toward the Gal-NAc-Muc5AC glycopeptide, but no detectable activity to mono-GalNAc-glycosylated Muc1a, Muc2, Muc7 and EA2. May play an important role in the initial step of mucin-type oligosaccharide biosynthesis in digestive organs. The polypeptide is Polypeptide N-acetylgalactosaminyltransferase 12 (GALNT12) (Homo sapiens (Human)).